Here is a 431-residue protein sequence, read N- to C-terminus: Ribonuclease TTHA0252 (431 aa).

Zn(2+) contacts are provided by His59, His61, Asp63, His64, His141, Asp162, and His400.

It belongs to the metallo-beta-lactamase superfamily. RNA-metabolizing metallo-beta-lactamase-like family. In terms of assembly, monomer. The cofactor is Zn(2+).

It is found in the cytoplasm. With respect to regulation, inhibited by cadmium, cobalt, manganese, magnesium, calcium and nickel ions. In terms of biological role, has endoribonuclease activity towards 23S and 16S rRNA (in vitro). This Thermus thermophilus (strain ATCC 27634 / DSM 579 / HB8) protein is Ribonuclease TTHA0252.